Here is a 264-residue protein sequence, read N- to C-terminus: Small ribosomal subunit protein uS2 (264 aa).

The interval 233-264 (AQTQAGGKAEQEAPATEEAADAQTEEAATPAE) is disordered.

This sequence belongs to the universal ribosomal protein uS2 family.

The polypeptide is Small ribosomal subunit protein uS2 (Psychrobacter arcticus (strain DSM 17307 / VKM B-2377 / 273-4)).